Here is a 277-residue protein sequence, read N- to C-terminus: Caspase-3 (277 aa).

Position 1 is an N-acetylmethionine (M1). 2 consecutive propeptides follow at residues 1-9 (MENNKTSVD) and 10-28 (SKSI…KSVD). K11 is subject to N6-acetyllysine. S26 is subject to Phosphoserine. Residues H121 and C163 contribute to the active site. S-nitrosocysteine; in inhibited form is present on C163.

Belongs to the peptidase C14A family. As to quaternary structure, heterotetramer that consists of two anti-parallel arranged heterodimers, each one formed by a 17 kDa (p17) and a 12 kDa (p12) subunit. Interacts with BIRC6/bruce. Post-translationally, cleavage by granzyme B, caspase-6, caspase-8 and caspase-10 generates the two active subunits. Additional processing of the propeptides is likely due to the autocatalytic activity of the activated protease. Active heterodimers between the small subunit of caspase-7 protease and the large subunit of caspase-3 also occur and vice versa. S-nitrosylated on its catalytic site cysteine in unstimulated cell lines and denitrosylated upon activation of the Fas apoptotic pathway, associated with an increase in intracellular caspase activity. Fas therefore activates caspase-3 not only by inducing the cleavage of the caspase zymogen to its active subunits, but also by stimulating the denitrosylation of its active site thiol. In terms of processing, ubiquitinated by BIRC6; this activity is inhibited by DIABLO/SMAC. Highest expression in spleen, lung, liver, kidney and heart. Lower expression in brain, skeletal muscle and testis.

Its subcellular location is the cytoplasm. The enzyme catalyses Strict requirement for an Asp residue at positions P1 and P4. It has a preferred cleavage sequence of Asp-Xaa-Xaa-Asp-|- with a hydrophobic amino-acid residue at P2 and a hydrophilic amino-acid residue at P3, although Val or Ala are also accepted at this position.. Its activity is regulated as follows. Inhibited by BIRC6; following inhibition of BIRC6-caspase binding by DIABLO/SMAC, BIRC6 is subjected to caspase cleavage, leading to an increase in active caspases. Its function is as follows. Thiol protease that acts as a major effector caspase involved in the execution phase of apoptosis. Following cleavage and activation by initiator caspases (CASP8, CASP9 and/or CASP10), mediates execution of apoptosis by catalyzing cleavage of many proteins. At the onset of apoptosis, it proteolytically cleaves poly(ADP-ribose) polymerase PARP1 at a '216-Asp-|-Gly-217' bond. Cleaves and activates sterol regulatory element binding proteins (SREBPs) between the basic helix-loop-helix leucine zipper domain and the membrane attachment domain. Cleaves and activates caspase-6, -7 and -9 (CASP6, CASP7 and CASP9, respectively). Cleaves and inactivates interleukin-18 (IL18). Triggers cell adhesion in sympathetic neurons through RET cleavage. Cleaves IL-1 beta between an Asp and an Ala, releasing the mature cytokine which is involved in a variety of inflammatory processes. Cleaves and inhibits serine/threonine-protein kinase AKT1 in response to oxidative stress. Acts as an inhibitor of type I interferon production during virus-induced apoptosis by mediating cleavage of antiviral proteins CGAS, IRF3 and MAVS, thereby preventing cytokine overproduction. Also involved in pyroptosis by mediating cleavage and activation of gasdermin-E (GSDME). Cleaves XRCC4 and phospholipid scramblase proteins XKR4, XKR8 and XKR9, leading to promote phosphatidylserine exposure on apoptotic cell surface. Cleaves BIRC6 following inhibition of BIRC6-caspase binding by DIABLO/SMAC. The sequence is that of Caspase-3 (Casp3) from Mus musculus (Mouse).